The primary structure comprises 635 residues: Thrombopoietin receptor (635 aa).

Positions 1–25 are cleaved as a signal peptide; sequence MPSWALFMVTSCLLLAPQNLAQVSS. The Extracellular portion of the chain corresponds to 26–491; that stretch reads QDVSLLASDS…RVETATETAW (466 aa). 2 disulfides stabilise this stretch: Cys40–Cys50 and Cys77–Cys93. Asn117 and Asn178 each carry an N-linked (GlcNAc...) asparagine glycan. The Fibronectin type-III 1 domain maps to 172–281; it reads GPRDPKNSTG…WSLPVTVDLP (110 aa). 4 cysteine pairs are disulfide-bonded: Cys193/Cys323, Cys194/Cys241, Cys291/Cys301, and Cys334/Cys352. The interval 205–232 is disordered; the sequence is ALDQSPCAQPTMPWQDGPKQTSPSREAS. N-linked (GlcNAc...) asparagine glycosylation occurs at Asn298. A glycan (N-linked (GlcNAc...) asparagine) is linked at Asn358. The 95-residue stretch at 392–486 folds into the Fibronectin type-III 2 domain; it reads PTPNLHWREI…WSDPTRVETA (95 aa). The WSXWS motif signature appears at 474–478; the sequence is WSSWS. A helical transmembrane segment spans residues 492 to 513; that stretch reads ISLVTALHLVLGLSAVLGLLLL. The Cytoplasmic portion of the chain corresponds to 514–635; the sequence is RWQFPAHYRR…YLPLSYWQQP (122 aa). The Box 1 motif signature appears at 528-536; sequence LWPSLPDLH. Residues Lys553 and Lys573 each participate in a glycyl lysine isopeptide (Lys-Gly) (interchain with G-Cter in ubiquitin) cross-link. Residues Tyr591, Tyr626, and Tyr631 each carry the phosphotyrosine modification.

This sequence belongs to the type I cytokine receptor family. Type 1 subfamily. In terms of assembly, homodimer. Interacts with ATXN2L. Interacts with JAK2 and TYK2; these interactions increase MPL localization to the cell membrane. Interacts with THPO. Interacts with SHIP/INPP5D. Interacts with BTK. Interacts with SYK; this interaction negatively regulates THPO-mediated ERK1/2 signaling. Phosphorylated at Tyr-591 in response to THPO stimulation. In terms of processing, ubiquitination at Lys-553 and Lys-573 targets MPL for degradation by both the lysosomal and proteasomal pathways. The E3 ubiquitin-protein ligase CBL significantly contributes to this ubiquitination. In terms of tissue distribution, expressed at a low level in a large number of cells of hematopoietic origin. Isoform 1 and isoform 2 are always found to be coexpressed.

The protein resides in the cell membrane. It localises to the golgi apparatus. The protein localises to the cell surface. Receptor for thrombopoietin that regulates hematopoietic stem cell renewal, megakaryocyte differentiation, and platelet formation. Upon activation by THPO, induces rapid tyrosine phosphorylation and activation of JAK2, providing docking sites for many signaling proteins such as STAT5, SHIP/INPP5D, GRB2, SOS1 and PI3K. In turn, These signaling cascades lead to the proliferation, survival, and differentiation of megakaryocytes, ultimately leading to increased platelet production. The sequence is that of Thrombopoietin receptor (MPL) from Homo sapiens (Human).